We begin with the raw amino-acid sequence, 209 residues long: Probable endopeptidase Cgl2188 (209 aa).

The signal sequence occupies residues 1–35; it reads MGKHRRNNSNATRKAVAASAVALGATAAIASPAQA. The 115-residue stretch at 95–209 folds into the NlpC/P60 domain; that stretch reads ASTGQAIVDA…YMPFHSAVRF (115 aa). The active-site Nucleophile is cysteine 125. Histidine 173 serves as the catalytic Proton acceptor. Residue histidine 185 is part of the active site.

Belongs to the peptidase C40 family.

Its subcellular location is the secreted. This Corynebacterium glutamicum (strain ATCC 13032 / DSM 20300 / JCM 1318 / BCRC 11384 / CCUG 27702 / LMG 3730 / NBRC 12168 / NCIMB 10025 / NRRL B-2784 / 534) protein is Probable endopeptidase Cgl2188.